The chain runs to 571 residues: MTPALAAGLQVAFVLAVLAVAYVPVGDYMARVYESRRHLRFESVLYRLCRINPHTEQTWYGYAGSVLGFSTASVLFLYALQRIQGVLPLSGDLSGVSPAVAFNTAVSFVTNTNWQSYAPETTMSNLTQPVGLAVQNFVSAAVGMAVAVALIRGFVRVSRGGEIGNFWVDLTRGSLRILLPFSFVIALILLSQGVIQSFHPGFASTGLDGNSVTNALAPVASQEAIKELGTNGGGILAANSAHPFENPTPVSNIVEILAILLIPVSLTRTFGTMVGDPHDRASEVSGHRQGLTLLAVMGILWGSLLAVTLAAESGRRGVAATAAGAMMEGKEVRFGIPGTALFAVSTTGTSTGAVNSAHDSLSPLGGGAVLLNMLLGEIAPGGVGTGLYGILVLALIAVFVGGLLVGRTPEYLGKKLRQREITLAALSVLVMPALVLIGTGITVILSSTTGYQGNSGDPGSPGSIHGFSEVLYAFASASNNNGSAFGGLTVTSDWFQTALGLCMLFGRFLPIIFVLALAGSLASQKKTAAGAGTLPTAGPMFTGLLTGTVVLVAALTFFPALALGPIAEALQ.

12 helical membrane-spanning segments follow: residues 5 to 25 (LAAG…YVPV), 60 to 80 (YGYA…LYAL), 86 to 106 (VLPL…NTAV), 131 to 151 (GLAV…VALI), 177 to 197 (ILLP…VIQS), 247 to 267 (PTPV…VSLT), 291 to 311 (LTLL…TLAA), 334 to 354 (FGIP…TGAV), 386 to 406 (GLYG…LLVG), 425 to 445 (ALSV…TVIL), 498 to 518 (ALGL…LALA), and 547 to 567 (GTVV…GPIA).

Belongs to the KdpA family. As to quaternary structure, the system is composed of three essential subunits: KdpA, KdpB and KdpC.

Its subcellular location is the cell membrane. In terms of biological role, part of the high-affinity ATP-driven potassium transport (or Kdp) system, which catalyzes the hydrolysis of ATP coupled with the electrogenic transport of potassium into the cytoplasm. This subunit binds the extracellular potassium ions and delivers the ions to the membrane domain of KdpB through an intramembrane tunnel. The polypeptide is Potassium-transporting ATPase potassium-binding subunit (Rhodococcus jostii (strain RHA1)).